Here is an 89-residue protein sequence, read N- to C-terminus: Large ribosomal subunit protein bL27 (89 aa).

Residues 1-20 (MAHKKAGGSSRNGRDSIGRR) form a disordered region.

This sequence belongs to the bacterial ribosomal protein bL27 family.

This chain is Large ribosomal subunit protein bL27, found in Ruegeria pomeroyi (strain ATCC 700808 / DSM 15171 / DSS-3) (Silicibacter pomeroyi).